Reading from the N-terminus, the 291-residue chain is MAKTPGPISLIEPLSGNSALLVKINAVYVVKRSRYQEIVVADTEDFGRALILDDYIQSSYYDEVYYHESLVHPAMSTHPSPADVLILGGGEGATLREVLKHRTVKRAVMVDIDGDVVEVARRYLPQMHQGAFDDPRAQVVIEDGFVYVERALAAGDKFDVVIMDLTDPYSSDIAKQLYAPGFFKKVRGLLREDGLVVTQAGNSFFFPEAYDMVLHGVRSSFPTVAEYSVWIPSFGYAVNYILGSLKYNPTALTPEEVDRRLRERGVQTHFYSGRTHLGLMSLPIHRKIRRV.

The PABS domain maps to 5-245 (PGPISLIEPL…YAVNYILGSL (241 aa)). Q36 is a binding site for S-methyl-5'-thioadenosine. Spermidine is bound by residues H67 and E91. Residues D111 and 143-144 (DG) contribute to the S-methyl-5'-thioadenosine site. The active-site Proton acceptor is the D164.

It belongs to the spermidine/spermine synthase family. As to quaternary structure, homodimer or homotetramer.

The protein localises to the cytoplasm. The enzyme catalyses S-adenosyl 3-(methylsulfanyl)propylamine + putrescine = S-methyl-5'-thioadenosine + spermidine + H(+). It participates in amine and polyamine biosynthesis; spermidine biosynthesis; spermidine from putrescine: step 1/1. In terms of biological role, catalyzes the irreversible transfer of a propylamine group from the amino donor S-adenosylmethioninamine (decarboxy-AdoMet) to putrescine (1,4-diaminobutane) to yield spermidine. This Pyrobaculum neutrophilum (strain DSM 2338 / JCM 9278 / NBRC 100436 / V24Sta) (Thermoproteus neutrophilus) protein is Polyamine aminopropyltransferase.